The chain runs to 153 residues: Aspartate carbamoyltransferase regulatory chain (153 aa).

Zn(2+)-binding residues include Cys109, Cys114, Cys138, and Cys141.

It belongs to the PyrI family. In terms of assembly, contains catalytic and regulatory chains. Zn(2+) is required as a cofactor.

Involved in allosteric regulation of aspartate carbamoyltransferase. The sequence is that of Aspartate carbamoyltransferase regulatory chain from Salmonella newport (strain SL254).